The following is a 217-amino-acid chain: MASTGLELLGMTLAVLGWLGTLVSCALPLWKVTAFIGNSIVVAQVVWEGLWMSCVVQSTGQMQCKVYDSLLALPQDLQAARALCVVALLLALLGLLVAITGAQCTTCVEDEGAKARIVLTAGVLLLLSGILVLIPVCWTAHAIIQDFYNPLVAEALKRELGASLYLGWAAAALLMLGGGLLCCTCPPSHFERPRGPRLGYSIPSRSGASGLDKRDYV.

The Cytoplasmic segment spans residues 1–12; it reads MASTGLELLGMT. A helical transmembrane segment spans residues 13-33; the sequence is LAVLGWLGTLVSCALPLWKVT. Topologically, residues 34–81 are extracellular; sequence AFIGNSIVVAQVVWEGLWMSCVVQSTGQMQCKVYDSLLALPQDLQAAR. A helical membrane pass occupies residues 82-102; sequence ALCVVALLLALLGLLVAITGA. The Cytoplasmic segment spans residues 103–116; it reads QCTTCVEDEGAKAR. The chain crosses the membrane as a helical span at residues 117 to 137; the sequence is IVLTAGVLLLLSGILVLIPVC. The Extracellular segment spans residues 138–159; sequence WTAHAIIQDFYNPLVAEALKRE. Residues 160-180 form a helical membrane-spanning segment; that stretch reads LGASLYLGWAAAALLMLGGGL. The Cytoplasmic portion of the chain corresponds to 181–217; the sequence is LCCTCPPSHFERPRGPRLGYSIPSRSGASGLDKRDYV.

Belongs to the claudin family. As to quaternary structure, interacts with CLDN1, CD81 and OCLN.

Its subcellular location is the cell junction. It is found in the tight junction. The protein localises to the cell membrane. Plays a major role in tight junction-specific obliteration of the intercellular space, through calcium-independent cell-adhesion activity. The sequence is that of Claudin-9 (Cldn9) from Mus musculus (Mouse).